The following is a 265-amino-acid chain: O-methyltransferase NEC2 (265 aa).

The protein belongs to the methyltransferase superfamily.

It catalyses the reaction desmethylnectriapyrone + S-adenosyl-L-methionine = nectriapyrone + S-adenosyl-L-homocysteine + H(+). In terms of biological role, O-methyltransferase; part of the gene cluster that mediates the biosynthesis of nectriapyrone and its analogs phomopyrone A, acropyrone and zaepyrone. The nectriapyrone biosynthetic gene cluster consists of two genes, the highly reducing polyketide synthase NEC1 that produces a demethylated analog of nectriapyrone from one unit of acetyl-CoA and one unit of malonyl-CoA; and the O-methyltransferase NEC2 that further methylates the NEC1 product to yield nectriapyrone. Nectriapyrone is further hydrolyzed to nectriapyrone D, also known as gulypyrone B, by an unidentified hydrolase localized outside the nectriapyrone cluster. In Pyricularia oryzae (strain 70-15 / ATCC MYA-4617 / FGSC 8958) (Rice blast fungus), this protein is O-methyltransferase NEC2.